Consider the following 406-residue polypeptide: DNA repair protein RAD55 (406 aa).

Position 43–50 (43–50 (GPPGIGKT)) interacts with ATP. Residues 385–406 (DSNDNPLPNAEGKEEIIYDSEG) form a disordered region.

This sequence belongs to the RecA family. RAD55 subfamily.

The protein resides in the nucleus. Required for radiation resistance and meiotic viability and presumably acts in recombination and recombinational DNA repair pathways. This chain is DNA repair protein RAD55 (RAD55), found in Saccharomyces cerevisiae (strain ATCC 204508 / S288c) (Baker's yeast).